The sequence spans 418 residues: MLTKAPRGTKDILPSESYKWQYIEGLIREICDVYGFKEIRTPGFEHTELFLRGVGESTDIVRKEMYTFTDKGGRSITLKPEGTSPAVRAFIEHNLYAETQPTKLYYITPVYRYERPQSGRLREHHQFGVEIFGAKSASADAEVISVAMTLLKKLGLNNLELRINSVGCPVCRKNYNKVLKEFLKNNLEYLCDDCKVRYEINPLRVLDCKVESCQRITKDAPLITDYLCDDCKSHFEELQKYLDIMGYDYIIDPRIVRGLDYYTKTAFEIISKDIGAQGTVCGGGRYDGLIEECGGPSMPGVGFGMGLERLLITLEQNGIEIPKPEGVDLFIAYVGEEAKLFTFALANKLRFNGLKVERDNMDRSLKAQMKYANKLNAKFAIVIGEEEMKENKVKLKDMRVGSEVEISIDEIEQRIKNI.

Belongs to the class-II aminoacyl-tRNA synthetase family. As to quaternary structure, homodimer.

Its subcellular location is the cytoplasm. The catalysed reaction is tRNA(His) + L-histidine + ATP = L-histidyl-tRNA(His) + AMP + diphosphate + H(+). The chain is Histidine--tRNA ligase from Thermoanaerobacter pseudethanolicus (strain ATCC 33223 / 39E) (Clostridium thermohydrosulfuricum).